The following is a 222-amino-acid chain: Protein-L-isoaspartate O-methyltransferase (222 aa).

The active site involves Ser-69.

It belongs to the methyltransferase superfamily. L-isoaspartyl/D-aspartyl protein methyltransferase family.

Its subcellular location is the cytoplasm. It catalyses the reaction [protein]-L-isoaspartate + S-adenosyl-L-methionine = [protein]-L-isoaspartate alpha-methyl ester + S-adenosyl-L-homocysteine. Functionally, catalyzes the methyl esterification of L-isoaspartyl residues in peptides and proteins that result from spontaneous decomposition of normal L-aspartyl and L-asparaginyl residues. It plays a role in the repair and/or degradation of damaged proteins. This is Protein-L-isoaspartate O-methyltransferase from Caulobacter vibrioides (strain NA1000 / CB15N) (Caulobacter crescentus).